The sequence spans 148 residues: Cystatin-C (148 aa).

An N-terminal signal peptide occupies residues 1–30 (MVGSPRAPLLLLASLIVALALALAVSPAAA). Q31 carries the post-translational modification Pyrrolidone carboxylic acid. The Secondary area of contact signature appears at 84–88 (QVVSG). Disulfide bonds link C102/C112 and C126/C146.

The protein resides in the secreted. In terms of biological role, this is a thiol proteinase inhibitor. The polypeptide is Cystatin-C (CST3) (Bos taurus (Bovine)).